Reading from the N-terminus, the 313-residue chain is Pyrimidine-specific ribonucleoside hydrolase RihB (313 aa).

The active-site Proton acceptor is the D11. Residues D11, D16, and V124 each contribute to the Ca(2+) site. Residues Q227 and H239 each contribute to the substrate site. D240 provides a ligand contact to Ca(2+).

This sequence belongs to the IUNH family. RihB subfamily. Homotetramer. Ca(2+) serves as cofactor.

It catalyses the reaction a pyrimidine ribonucleoside + H2O = a pyrimidine nucleobase + D-ribose. Functionally, hydrolyzes cytidine or uridine to ribose and cytosine or uracil, respectively. Has a clear preference for cytidine over uridine. Strictly specific for ribonucleosides. In Escherichia coli (strain K12 / DH10B), this protein is Pyrimidine-specific ribonucleoside hydrolase RihB.